A 247-amino-acid polypeptide reads, in one-letter code: Nodulation protein H (247 aa).

The interval 1 to 17 (MTHSTLPPQPFAILAMP) is hydrophobic.

Functionally, required for the formation of sulfated nod factor. Proposed to transfer activated sulfate (PAPS) to a N-acetylglucosamine of the nod factor. This chain is Nodulation protein H (nodH), found in Rhizobium meliloti (strain 1021) (Ensifer meliloti).